We begin with the raw amino-acid sequence, 138 residues long: Acyl carrier protein 1, chloroplastic (138 aa).

A chloroplast-targeting transit peptide spans 1-56; it reads MASLSATTTVRVQPSSSSLHKLSQGNGRCSSIVCLDWGKSSFPTLRTSRRRSFISA. One can recognise a Carrier domain in the interval 59 to 134; it reads KETIDKVCDI…QAADVIESLL (76 aa). An O-(pantetheine 4'-phosphoryl)serine modification is found at serine 94.

The protein belongs to the acyl carrier protein (ACP) family. In terms of processing, 4'-phosphopantetheine is transferred from CoA to a specific serine of apo-ACP by acpS. This modification is essential for activity because fatty acids are bound in thioester linkage to the sulfhydryl of the prosthetic group.

Its subcellular location is the plastid. The protein localises to the chloroplast. Its pathway is lipid metabolism; fatty acid biosynthesis. Carrier of the growing fatty acid chain in fatty acid biosynthesis. This is Acyl carrier protein 1, chloroplastic (ACL1.1) from Spinacia oleracea (Spinach).